The primary structure comprises 544 residues: MTKFIFVTGGVVSSLGKGIAAASIAAILESRGLNVTMLKLDPYINVDPGTMSPFQHGEVFVTDDGAETDLDLGHYERFIDSTMTRRNSFSTGQVYENVIAKERRGDYLGGTVQVIPHITDEIKRRIHEGAAGYDVAIVEIGGTVGDIESLPFLEAIRQMRSQLGRNNTLFAHLSYVPYIAAAGEIKTKPTQHTVKEMLSIGLQPDILICRMDRTMPADERRKIALFCNVEERAIVGSYDVDSIYECPEMLHDQGIDNIITEQLQLNVQQADLTAWKKIVHAIQNPKHTVKIAMVGKYVDLTESYKSLIEALKHAGIHTETDVQITFVDSENIEKNKGDVSMLKDMDAILVPGGFGSRGVEGKIAAVRYARENNVPYLGICLGMQIALIEYARDVAGLKGANSTEFDLKCAAPVVALIDEWQTADGSVETRDESTDLGGTMRLGAQEVELKAGSLAAKIYGSGHIRERHRHRYEVNNNYVPTLEQAGLVIGGVSAGRERLVETIELPNHPWFFACQFHPEFTSNPRKGHPLFTAFVKAALNNKKA.

An amidoligase domain region spans residues 1–265; it reads MTKFIFVTGG…DNIITEQLQL (265 aa). Residue S13 participates in CTP binding. Residue S13 participates in UTP binding. ATP is bound by residues 14–19 and D71; that span reads SLGKGI. Residues D71 and E139 each coordinate Mg(2+). CTP contacts are provided by residues 146-148, 186-191, and K222; these read DIE and KTKPTQ. Residues 186-191 and K222 each bind UTP; that span reads KTKPTQ. Residues 290-544 enclose the Glutamine amidotransferase type-1 domain; the sequence is KIAMVGKYVD…VKAALNNKKA (255 aa). An L-glutamine-binding site is contributed by G353. Catalysis depends on C380, which acts as the Nucleophile; for glutamine hydrolysis. L-glutamine contacts are provided by residues 381 to 384, E404, and R471; that span reads LGMQ. Residues H517 and E519 contribute to the active site.

This sequence belongs to the CTP synthase family. As to quaternary structure, homotetramer.

It carries out the reaction UTP + L-glutamine + ATP + H2O = CTP + L-glutamate + ADP + phosphate + 2 H(+). The enzyme catalyses L-glutamine + H2O = L-glutamate + NH4(+). The catalysed reaction is UTP + NH4(+) + ATP = CTP + ADP + phosphate + 2 H(+). Its pathway is pyrimidine metabolism; CTP biosynthesis via de novo pathway; CTP from UDP: step 2/2. Allosterically activated by GTP, when glutamine is the substrate; GTP has no effect on the reaction when ammonia is the substrate. The allosteric effector GTP functions by stabilizing the protein conformation that binds the tetrahedral intermediate(s) formed during glutamine hydrolysis. Inhibited by the product CTP, via allosteric rather than competitive inhibition. Its function is as follows. Catalyzes the ATP-dependent amination of UTP to CTP with either L-glutamine or ammonia as the source of nitrogen. Regulates intracellular CTP levels through interactions with the four ribonucleotide triphosphates. This chain is CTP synthase, found in Neisseria meningitidis serogroup B (strain ATCC BAA-335 / MC58).